The primary structure comprises 219 residues: Mucosal pentraxin (219 aa).

Residues 1–19 (MEKLIVGILFLSVLSGSVA) form the signal peptide. In terms of domain architecture, Pentraxin (PTX) spans 24–219 (KGKAFIFPQE…YVVIKPKLWP (196 aa)). N-linked (GlcNAc...) asparagine glycosylation occurs at N51. An intrachain disulfide couples C55 to C114. Ca(2+) contacts are provided by D77, N78, E155, Q156, D157, and Q167.

This sequence belongs to the pentraxin family. Homopentamer. Pentraxin (or pentaxin) have a discoid arrangement of 5 non-covalently bound subunits. Ca(2+) is required as a cofactor. Expressed in colon.

Its subcellular location is the secreted. The polypeptide is Mucosal pentraxin (Mptx1) (Mus musculus (Mouse)).